A 210-amino-acid polypeptide reads, in one-letter code: Glutathione S-transferase P (210 aa).

A GST N-terminal domain is found at 2-81; the sequence is PPYTVVYFPV…HLGRTLGLYG (80 aa). Tyr4 is subject to Phosphotyrosine; by EGFR. Glutathione contacts are provided by residues Tyr8, Arg14, Trp39, Lys45, and 52–53; that span reads QL. Thr62 is modified (phosphothreonine). 65–66 lines the glutathione pocket; the sequence is QS. The GST C-terminal domain maps to 83-204; it reads DQREAALVDM…ASPEHVNLPI (122 aa). An N6-succinyllysine mark is found at Lys103 and Lys116. An N6-acetyllysine modification is found at Lys128.

The protein belongs to the GST superfamily. Pi family. In terms of assembly, homodimer. Interacts with CDK5.

The protein resides in the cytoplasm. It localises to the mitochondrion. Its subcellular location is the nucleus. It carries out the reaction RX + glutathione = an S-substituted glutathione + a halide anion + H(+). The catalysed reaction is prostaglandin J2 + glutathione = prostaglandin J2-S-(R)-glutathione. The enzyme catalyses prostaglandin J2 + glutathione = prostaglandin J2-S-(S)-glutathione. It catalyses the reaction prostaglandin A2 + glutathione = prostaglandin A2-S-(S)-glutathione. It carries out the reaction 11(S)-hydroxy-14(S),15(S)-epoxy-(5Z,8Z,12E)-eicosatrienoate + glutathione = (11S,15S)-dihydroxy-14(R)-S-glutathionyl-(5Z,8Z,12E)-eicosatrienoate. Its function is as follows. Conjugation of reduced glutathione to a wide number of exogenous and endogenous hydrophobic electrophiles. Involved in the formation of glutathione conjugates of both prostaglandin A2 (PGA2) and prostaglandin J2 (PGJ2). Participates in the formation of novel hepoxilin regioisomers. Negatively regulates CDK5 activity via p25/p35 translocation to prevent neurodegeneration. This is Glutathione S-transferase P (GSTP1) from Macaca mulatta (Rhesus macaque).